A 361-amino-acid chain; its full sequence is Homeobox protein knotted-1-like 6 (361 aa).

Positions 11–48 (VGASGVHGGHQHQHHHHPWGSSLSAIVAPPPPPQLQQQ) are disordered. Basic residues predominate over residues 19-28 (GHQHQHHHHP). Residues 242–262 (ELKHHLLKKYSGYLSSLKQEL) form the ELK domain. Positions 263 to 326 (SKKKKKGKLP…NQRKRHWKPS (64 aa)) form a DNA-binding region, homeobox; TALE-type.

The protein belongs to the TALE/KNOX homeobox family. Interacts with FTIP7. As to expression, expressed predominantly in shoot apices. Also found to a lesser extent in glumes.

The protein localises to the nucleus. Its subcellular location is the cytoplasm. Transcription factor that regulates genes involved in development. May be involved in shoot formation during embryogenesis. Overexpression in transgenic plants causes altered leaf morphology. Regulates anther dehiscence via direct repression of the auxin biosynthetic gene YUCCA4. Binds to the DNA sequence 5'-TGAC-3' in the promoter of the YUCCA4 gene and represses its activity during anther development. Reduction of auxin levels at late stage of anther development, after meiosis of microspore mother cells, is necessary for normal anther dehiscence and seed setting. The polypeptide is Homeobox protein knotted-1-like 6 (OSH1) (Oryza sativa subsp. japonica (Rice)).